The primary structure comprises 244 residues: uncharacterized protein (244 aa).

2 consecutive transmembrane segments (helical) span residues 29–49 (WIPW…TQHM) and 139–159 (LGMK…ATVI).

The protein belongs to the FMP10 family.

It is found in the mitochondrion membrane. This is an uncharacterized protein from Saccharomyces cerevisiae (strain ATCC 204508 / S288c) (Baker's yeast).